The primary structure comprises 315 residues: Methionyl-tRNA formyltransferase (315 aa).

113–116 serves as a coordination point for (6S)-5,6,7,8-tetrahydrofolate; the sequence is SILP.

It belongs to the Fmt family.

The catalysed reaction is L-methionyl-tRNA(fMet) + (6R)-10-formyltetrahydrofolate = N-formyl-L-methionyl-tRNA(fMet) + (6S)-5,6,7,8-tetrahydrofolate + H(+). Functionally, attaches a formyl group to the free amino group of methionyl-tRNA(fMet). The formyl group appears to play a dual role in the initiator identity of N-formylmethionyl-tRNA by promoting its recognition by IF2 and preventing the misappropriation of this tRNA by the elongation apparatus. This Vibrio cholerae serotype O1 (strain M66-2) protein is Methionyl-tRNA formyltransferase.